A 90-amino-acid polypeptide reads, in one-letter code: Small ribosomal subunit protein uS17 (90 aa).

The protein belongs to the universal ribosomal protein uS17 family. Part of the 30S ribosomal subunit.

Its function is as follows. One of the primary rRNA binding proteins, it binds specifically to the 5'-end of 16S ribosomal RNA. The polypeptide is Small ribosomal subunit protein uS17 (Burkholderia cenocepacia (strain ATCC BAA-245 / DSM 16553 / LMG 16656 / NCTC 13227 / J2315 / CF5610) (Burkholderia cepacia (strain J2315))).